The following is a 534-amino-acid chain: 5'-nucleotidase domain-containing protein 3 (534 aa).

Residue Asp-104 is the Nucleophile of the active site. Asp-104 and Asp-106 together coordinate Mg(2+). Asp-106 acts as the Proton donor in catalysis. 234–242 (KEAIRDVHV) contributes to the substrate binding site. Asp-372 serves as a coordination point for Mg(2+).

This sequence belongs to the 5'(3')-deoxyribonucleotidase family. Mg(2+) is required as a cofactor.

The polypeptide is 5'-nucleotidase domain-containing protein 3 (nt5dc3) (Xenopus tropicalis (Western clawed frog)).